The primary structure comprises 214 residues: UBX domain-containing protein 10 (214 aa).

Basic residues predominate over residues 1–13; it reads MHVTRPKSSKGRS. Residues 1–79 are disordered; sequence MHVTRPKSSK…AYDRPPEEPV (79 aa). The segment covering 16-25 has biased composition (polar residues); that stretch reads MITNSSMIYT. Residues 49–60 are compositionally biased toward low complexity; that stretch reads SLRSRAILRRSS. Positions 127–204 constitute a UBX domain; the sequence is PEESDLLLAI…GVLNKSVLCI (78 aa).

It belongs to the UBXN10 family.

It localises to the cell projection. Its subcellular location is the cilium. Required for ciliogenesis. Acts as a tethering factor that facilitates recruitment of vcp/p97 to the intraflagellar transport complex B (IFT-B) in cilia. The polypeptide is UBX domain-containing protein 10 (Danio rerio (Zebrafish)).